The chain runs to 736 residues: 3',5'-cyclic-AMP phosphodiesterase 4B (736 aa).

2 disordered regions span residues 51–77 (QLPP…PTTL) and 96–116 (DVEN…SSSS). Position 56 is a phosphoserine (serine 56). The residue at position 290 (serine 290) is a Phosphoserine. In terms of domain architecture, PDEase spans 330-659 (VNTENEDHLA…NWYQSMIPQS (330 aa)). The active-site Proton donor is histidine 406. Residue histidine 406 coordinates 3',5'-cyclic AMP. 2 residues coordinate AMP: histidine 406 and histidine 410. Histidine 410, histidine 446, aspartate 447, and aspartate 564 together coordinate Zn(2+). Residues aspartate 447, aspartate 564, glutamine 615, and phenylalanine 618 each coordinate AMP. Aspartate 447 contributes to the Mg(2+) binding site. A Mn(2+)-binding site is contributed by aspartate 447. 2 residues coordinate 3',5'-cyclic AMP: glutamine 615 and phenylalanine 618. Serine 659 and serine 661 each carry phosphoserine. The disordered stretch occupies residues 685–736 (EEEDSEGPEKEGEGPNYFSSTKTLCVIDPENRDSLEETDIDIATEDKSLIDT).

The protein belongs to the cyclic nucleotide phosphodiesterase family. PDE4 subfamily. As to quaternary structure, interacts with DISC1. The cofactor is Zn(2+). It depends on Mg(2+) as a cofactor. Mn(2+) is required as a cofactor. Widely expressed. As to expression, expressed in brain, heart, lung and liver. In terms of tissue distribution, expressed in liver and brain.

The protein localises to the cytoplasm. It localises to the cell membrane. It catalyses the reaction 3',5'-cyclic AMP + H2O = AMP + H(+). The protein operates within purine metabolism; 3',5'-cyclic AMP degradation; AMP from 3',5'-cyclic AMP: step 1/1. With respect to regulation, inhibited by rolipram. Hydrolyzes the second messenger cAMP, which is a key regulator of many important physiological processes. The polypeptide is 3',5'-cyclic-AMP phosphodiesterase 4B (Rattus norvegicus (Rat)).